A 512-amino-acid chain; its full sequence is D-alanine--D-alanyl carrier protein ligase (512 aa).

152–153 (TS) contacts ATP. Aspartate 199 contributes to the D-alanine binding site. Residue 294-299 (NAYGPT) coordinates ATP. Valine 303 lines the D-alanine pocket. Residues aspartate 385, 397-400 (YGGR), and lysine 499 contribute to the ATP site. Lysine 499 contributes to the D-alanine binding site.

The protein belongs to the ATP-dependent AMP-binding enzyme family. DltA subfamily.

The protein resides in the cytoplasm. The enzyme catalyses holo-[D-alanyl-carrier protein] + D-alanine + ATP = D-alanyl-[D-alanyl-carrier protein] + AMP + diphosphate. The protein operates within cell wall biogenesis; lipoteichoic acid biosynthesis. Functionally, catalyzes the first step in the D-alanylation of lipoteichoic acid (LTA), the activation of D-alanine and its transfer onto the D-alanyl carrier protein (Dcp) DltC. In an ATP-dependent two-step reaction, forms a high energy D-alanyl-AMP intermediate, followed by transfer of the D-alanyl residue as a thiol ester to the phosphopantheinyl prosthetic group of the Dcp. D-alanylation of LTA plays an important role in modulating the properties of the cell wall in Gram-positive bacteria, influencing the net charge of the cell wall. The chain is D-alanine--D-alanyl carrier protein ligase from Streptococcus pyogenes serotype M49 (strain NZ131).